Reading from the N-terminus, the 174-residue chain is 3-hydroxydecanoyl-[acyl-carrier-protein] dehydratase (174 aa).

His73 is a catalytic residue.

The protein belongs to the thioester dehydratase family. FabA subfamily. In terms of assembly, homodimer.

The protein resides in the cytoplasm. The catalysed reaction is a (3R)-hydroxyacyl-[ACP] = a (2E)-enoyl-[ACP] + H2O. The enzyme catalyses (3R)-hydroxydecanoyl-[ACP] = (2E)-decenoyl-[ACP] + H2O. It carries out the reaction (2E)-decenoyl-[ACP] = (3Z)-decenoyl-[ACP]. The protein operates within lipid metabolism; fatty acid biosynthesis. Functionally, necessary for the introduction of cis unsaturation into fatty acids. Catalyzes the dehydration of (3R)-3-hydroxydecanoyl-ACP to E-(2)-decenoyl-ACP and then its isomerization to Z-(3)-decenoyl-ACP. Can catalyze the dehydratase reaction for beta-hydroxyacyl-ACPs with saturated chain lengths up to 16:0, being most active on intermediate chain length. This is 3-hydroxydecanoyl-[acyl-carrier-protein] dehydratase from Saccharophagus degradans (strain 2-40 / ATCC 43961 / DSM 17024).